Consider the following 259-residue polypeptide: UBX domain-containing protein 2A (259 aa).

Residues 1–151 form a required for interaction with CHRNA3 region; that stretch reads MKDVDNLKSI…SATPKIVSKA (151 aa). The interval 1–164 is required for inhibition of CHRNA3 ubiquitination and translocation of CHRNA3 to the plasma membrane resulting in an increase in acetylcholine-gated nicotinic acetylcholine receptor currents; it reads MKDVDNLKSI…EVENKNNLSA (164 aa). Residues 60 to 124 enclose the SEP domain; sequence QVDVNIKLWK…VEDKKNEICL (65 aa). Residues 167-259 are required for interaction with VCP; the sequence is LNNLEPITNI…TASFRELSEH (93 aa). A UBX domain is found at 169–246; sequence NLEPITNIQI…DLQNAVIIQR (78 aa).

In terms of assembly, part of a complex composed of STUB1/CHIP, VCP/p97, CHRNA3, and UBXN2A that modulates the ubiquitination and endoplasmic reticulum-associated degradation (ERAD) of CHRNA3. Within the complex UBXN2A acts as a scaffold protein required for the interaction of CHRNA3 with VCP/p97, this interaction also inhibits CHRNA3 ubiquitination by STUB1/CHIP and subsequently ERAD. Interacts (via SEP domain) with CHRNA3 and interacts (via UBX domain) with VCP/P97; these interactions are required for the interaction of CHRNA3 with the STUB1-VCP-UBXN2A complex. Interacts with HSPA9/MOT-2 (via SBD domain); the interaction inhibits HSPA9/MOT-2 interaction with and degradation of p53, thereby promotes p53 translocation to the nucleus. Interacts with RICTOR. Post-translationally, ubiquitinated. In terms of tissue distribution, expressed in the colon (at protein level).

It is found in the golgi apparatus. The protein localises to the endoplasmic reticulum. Its subcellular location is the perikaryon. It localises to the cell projection. The protein resides in the dendrite. It is found in the nucleus. The protein localises to the cytoplasm. In terms of biological role, acts to repress the ubiquitination and subsequent endoplasmic reticulum-associated degradation of CHRNA3 by the STUB1-VCP-UBXN2A complex in cortical neurons. Also acts to promote the translocation of CHRNA3 to the plasma membrane and subsequently increases plasma membrane acetylcholine-gated ion-channel activation. Plays a role in the inhibition of STUB1-mediated TP53 degradation, via its interaction with HSPA9 which acts to inhibit TP53 binding to HSPA9. Positively mediates the ubiquitination and proteosomal degradation of RICTOR, may thereby act as a negative regulator of the mTORC2 pathway. The polypeptide is UBX domain-containing protein 2A (Homo sapiens (Human)).